The primary structure comprises 216 residues: Somatotropin (216 aa).

The signal sequence occupies residues 1–26 (MAAGPRTSMLLAFALLCLPWTQEVGA). A Zn(2+)-binding site is contributed by His-45. Cysteines 78 and 189 form a disulfide. Phosphoserine is present on Ser-131. Glu-198 contacts Zn(2+). An intrachain disulfide couples Cys-206 to Cys-214.

Belongs to the somatotropin/prolactin family.

The protein resides in the secreted. Its function is as follows. Plays an important role in growth control. Its major role in stimulating body growth is to stimulate the liver and other tissues to secrete IGF1. It stimulates both the differentiation and proliferation of myoblasts. It also stimulates amino acid uptake and protein synthesis in muscle and other tissues. This chain is Somatotropin (GH1), found in Delphinus delphis (Short-beaked common dolphin).